The following is a 264-amino-acid chain: E3 ubiquitin-protein ligase MARCHF8 (264 aa).

The disordered stretch occupies residues 15–47 (LGHSVSRSSNISKAGSPTSVSAPSRFPRTSVTP). Positions 16-47 (GHSVSRSSNISKAGSPTSVSAPSRFPRTSVTP) are enriched in polar residues. The segment at 45-106 (VTPSSQDICR…ELCKFEFIME (62 aa)) adopts an RING-CH-type zinc-finger fold. Zn(2+)-binding residues include cysteine 53, cysteine 56, cysteine 70, cysteine 72, histidine 80, cysteine 83, cysteine 96, and cysteine 99. 2 consecutive transmembrane segments (helical) span residues 130–150 (CSVT…YVLI) and 170–190 (FWTK…FMYV).

The protein localises to the cytoplasmic vesicle membrane. The protein resides in the lysosome membrane. Its subcellular location is the early endosome membrane. The catalysed reaction is S-ubiquitinyl-[E2 ubiquitin-conjugating enzyme]-L-cysteine + [acceptor protein]-L-lysine = [E2 ubiquitin-conjugating enzyme]-L-cysteine + N(6)-ubiquitinyl-[acceptor protein]-L-lysine.. Its pathway is protein modification; protein ubiquitination. In terms of biological role, E3 ubiquitin-protein ligase that mediates ubiquitination of cd86 and MHC class II proteins, such as hla-dr alpha and beta, and promotes their subsequent endocytosis and sorting to lysosomes via multivesicular bodies. This Xenopus laevis (African clawed frog) protein is E3 ubiquitin-protein ligase MARCHF8 (marchf8).